Consider the following 606-residue polypeptide: Vitamin B12 transporter BtuB (606 aa).

Residues 1–22 (MQKSLLAIAMASLLTPVSYLHA) form the signal peptide. Residues 29 to 36 (DTVVVTAN) carry the TonB box motif. Positions 41–153 (PLAEVIASTT…IAGVINVITT (113 aa)) constitute a TBDR plug domain. The TBDR beta-barrel domain maps to 158-606 (SEGSVVSLGA…RYFANLTYQF (449 aa)). The short motif at 589–606 (LSYNAPERRYFANLTYQF) is the TonB C-terminal box element.

The protein belongs to the TonB-dependent receptor family. BtuB (TC 1.B.14.3.1) subfamily.

The protein resides in the cell outer membrane. In terms of biological role, involved in the active translocation of vitamin B12 (cyanocobalamin) across the outer membrane to the periplasmic space. It derives its energy for transport by interacting with the trans-periplasmic membrane protein TonB. The polypeptide is Vitamin B12 transporter BtuB (Vibrio vulnificus (strain CMCP6)).